A 465-amino-acid polypeptide reads, in one-letter code: Probable Xaa-Pro aminopeptidase PEPP (465 aa).

Residues Asp-259, Asp-270, Glu-395, and Glu-435 each coordinate Mn(2+).

The protein belongs to the peptidase M24B family. The cofactor is Mn(2+).

The catalysed reaction is Release of any N-terminal amino acid, including proline, that is linked to proline, even from a dipeptide or tripeptide.. Catalyzes the removal of a penultimate prolyl residue from the N-termini of peptides. This is Probable Xaa-Pro aminopeptidase PEPP (PEPP) from Pyricularia oryzae (strain 70-15 / ATCC MYA-4617 / FGSC 8958) (Rice blast fungus).